Here is a 372-residue protein sequence, read N- to C-terminus: Probable leucine aminopeptidase MCYG_03459 (372 aa).

Residues 1-18 (MKISTLAVVSAFAVTAIA) form the signal peptide. Residue N95 is glycosylated (N-linked (GlcNAc...) asparagine). Residues H175 and D194 each coordinate Zn(2+). N195 and N219 each carry an N-linked (GlcNAc...) asparagine glycan. 2 residues coordinate Zn(2+): E233 and D260. Residues C305 and C309 are joined by a disulfide bond. A Zn(2+)-binding site is contributed by H338.

This sequence belongs to the peptidase M28 family. M28E subfamily. Monomer. The cofactor is Zn(2+).

The protein localises to the secreted. Probable extracellular aminopeptidase which contributes to pathogenicity. In Arthroderma otae (strain ATCC MYA-4605 / CBS 113480) (Microsporum canis), this protein is Probable leucine aminopeptidase MCYG_03459.